The following is a 191-amino-acid chain: dTTP/UTP pyrophosphatase (191 aa).

The active-site Proton acceptor is Asp-75.

The protein belongs to the Maf family. YhdE subfamily. The cofactor is a divalent metal cation.

The protein localises to the cytoplasm. It carries out the reaction dTTP + H2O = dTMP + diphosphate + H(+). It catalyses the reaction UTP + H2O = UMP + diphosphate + H(+). Nucleoside triphosphate pyrophosphatase that hydrolyzes dTTP and UTP. May have a dual role in cell division arrest and in preventing the incorporation of modified nucleotides into cellular nucleic acids. The protein is dTTP/UTP pyrophosphatase of Aliivibrio fischeri (strain ATCC 700601 / ES114) (Vibrio fischeri).